The primary structure comprises 390 residues: Type II methyltransferase M.SacI (390 aa).

The 367-residue stretch at Leu5–Leu371 folds into the SAM-dependent MTase C5-type domain. Cys96 is an active-site residue.

It belongs to the class I-like SAM-binding methyltransferase superfamily. C5-methyltransferase family.

It carries out the reaction a 2'-deoxycytidine in DNA + S-adenosyl-L-methionine = a 5-methyl-2'-deoxycytidine in DNA + S-adenosyl-L-homocysteine + H(+). A beta methylase recognizes the double-stranded sequence 5'-GAGCTC-3', methylates C-4 on both strands, and protects the DNA from cleavage by the SacI endonuclease. In Streptomyces achromogenes, this protein is Type II methyltransferase M.SacI.